A 491-amino-acid polypeptide reads, in one-letter code: Delayed-rectifier potassium channel regulatory subunit KCNS3 (491 aa).

The Cytoplasmic portion of the chain corresponds to 1-182 (MVFGEFFHRP…IRMENPAYCL (182 aa)). A helical transmembrane segment spans residues 183 to 204 (SAKLIAISSLSVVLASIVAMCV). The Extracellular portion of the chain corresponds to 205 to 220 (HSMSEFQNEDGEVDDP). Residues 221 to 243 (VLEGVEIACIAWFTGELAIRLVA) form a helical membrane-spanning segment. Topologically, residues 244-254 (APSQKKFWKNP) are cytoplasmic. The chain crosses the membrane as a helical span at residues 255 to 275 (LNIIDFVSIIPFYATLAVDTK). Over 276–285 (EEESEDIENM) the chain is Extracellular. The chain crosses the membrane as a helical; Voltage-sensor span at residues 286 to 306 (GKVVQILRLMRIFRILKLARH). Topologically, residues 307 to 321 (SVGLRSLGATLRHSY) are cytoplasmic. Residues 322 to 343 (HEVGLLLLFLSVGISIFSVLIY) form a helical membrane-spanning segment. Over 344-357 (SVEKDELASSLTSI) the chain is Extracellular. Residues 358–369 (PICWWWATISMT) constitute an intramembrane region (helical). The Selectivity filter signature appears at 370–375 (TVGYGD). The stretch at 370–377 (TVGYGDTH) is an intramembrane region. At 378 to 384 (PVTLAGK) the chain is on the extracellular side. A helical membrane pass occupies residues 385 to 413 (IIASTCIICGILVVALPITIIFNKFSKYY). The Cytoplasmic segment spans residues 414–491 (QKQKDMDVDQ…TASLENCTAK (78 aa)).

Belongs to the potassium channel family. S (TC 1.A.1.2) subfamily. Kv9.3/KCNS3 sub-subfamily. Heterotetramer with KCNB1. Does not form homomultimers. As to expression, expressed in myocytes. Detected in lung, spleen, brain and heart.

It localises to the cell membrane. Its function is as follows. Potassium channel regulatory subunit that modulates the delayed rectifier potassium channel activity of KCNB1 by namely slowing down the deactivation and inactivation time constants. While it does not form functional channel on its own, it can form functional heterotetrameric channels with KCNB1. The polypeptide is Delayed-rectifier potassium channel regulatory subunit KCNS3 (Rattus norvegicus (Rat)).